The sequence spans 127 residues: uncharacterized protein (127 aa).

In terms of domain architecture, HTH asnC-type spans Met-1 to Thr-46.

Functionally, not known, symbiotically active. This is an uncharacterized protein from Sinorhizobium fredii (strain NBRC 101917 / NGR234).